A 55-amino-acid polypeptide reads, in one-letter code: Large ribosomal subunit protein bL33 (55 aa).

It belongs to the bacterial ribosomal protein bL33 family.

The protein is Large ribosomal subunit protein bL33 of Chelativorans sp. (strain BNC1).